A 310-amino-acid chain; its full sequence is Transcription factor UNE12 (310 aa).

Disordered regions lie at residues 124–156 and 229–253; these read HGQP…ATDP and SSSV…WSND. Residues 152-201 enclose the bHLH domain; that stretch reads QATDPHSIAERLRRERIAERIRALQELVPTVNKTDRAAMIDEIVDYVKFL.

Homodimer. Expressed constitutively in roots, leaves, stems, and flowers.

Its subcellular location is the nucleus. Its function is as follows. Required for ovule fertilization. The protein is Transcription factor UNE12 (UNE12) of Arabidopsis thaliana (Mouse-ear cress).